Reading from the N-terminus, the 574-residue chain is Probable cytochrome c oxidase subunit 1 (574 aa).

The chain crosses the membrane as a helical span at residues 40–60 (IGIMYCVACFIFFFVGGLLAL). His86 is a binding site for Fe(II)-heme a. The next 6 helical transmembrane spans lie at 89–109 (IMLL…VLPL), 121–141 (LNAF…AGFI), 170–190 (LWIM…VNMI), 213–233 (ILVT…ALFG), 258–278 (LFWF…FGIV), and 290–310 (IFGY…SVAV). 2 residues coordinate Cu cation: His264 and Tyr268. Positions 264–268 (HPEVY) form a cross-link, 1'-histidyl-3'-tyrosine (His-Tyr). Residues His313 and His314 each coordinate Cu cation. Helical transmembrane passes span 315-335 (MFAT…LIAV) and 359-379 (MLFS…GVLL). Residue His397 coordinates heme a3. 3 helical membrane-spanning segments follow: residues 398 to 418 (FHYV…YFWF), 433 to 453 (LHFW…HWLG), and 476 to 496 (VSTI…WNVF). His399 serves as a coordination point for Fe(II)-heme a.

Belongs to the heme-copper respiratory oxidase family. As to quaternary structure, associates with subunits II, III and IV to form cytochrome c oxidase. Cu(2+) is required as a cofactor. Requires heme as cofactor.

It localises to the cell membrane. The catalysed reaction is 4 Fe(II)-[cytochrome c] + O2 + 8 H(+)(in) = 4 Fe(III)-[cytochrome c] + 2 H2O + 4 H(+)(out). It functions in the pathway energy metabolism; oxidative phosphorylation. Its function is as follows. Cytochrome c oxidase is the component of the respiratory chain that catalyzes the reduction of oxygen to water. Subunits 1-3 form the functional core of the enzyme complex. CO I is the catalytic subunit of the enzyme. Electrons originating in cytochrome c are transferred via the copper A center of subunit 2 and heme A of subunit 1 to the bimetallic center formed by heme A3 and copper B. This is Probable cytochrome c oxidase subunit 1 (ctaD) from Mycobacterium leprae (strain TN).